The sequence spans 264 residues: Teichoic acids export ATP-binding protein TagH (264 aa).

In terms of domain architecture, ABC transporter spans 5–243 (VNIKNVTKEY…YEAFLNDFKK (239 aa)). 57-64 (GINGSGKS) is an ATP binding site.

It belongs to the ABC transporter superfamily. Teichoic acids exporter (TC 3.A.1.104.1) family. In terms of assembly, the complex is composed of two ATP-binding proteins (TagH) and two transmembrane proteins (TagG).

The protein resides in the cell membrane. The enzyme catalyses ATP + H2O + teichoic acidSide 1 = ADP + phosphate + teichoic acidSide 2.. Part of the ABC transporter complex TagGH involved in teichoic acids export. Responsible for energy coupling to the transport system. This is Teichoic acids export ATP-binding protein TagH from Staphylococcus aureus (strain Mu50 / ATCC 700699).